The sequence spans 288 residues: Dichloromethane dehalogenase (288 aa).

One can recognise a GST N-terminal domain in the interval 12–94 (KTLRLLYHPA…YVNEKFDGAG (83 aa)). Residues 100-252 (GTQERAQINQ…ASMFKRKTAV (153 aa)) enclose the GST C-terminal domain.

Belongs to the GST superfamily. In terms of assembly, homohexamer.

The protein localises to the cytoplasm. It carries out the reaction dichloromethane + H2O = formaldehyde + 2 chloride + 2 H(+). Its pathway is xenobiotic degradation; dichloromethane degradation. The chain is Dichloromethane dehalogenase (dcmA) from Methylorubrum extorquens (strain DSM 6343 / CIP 106787 / DM4) (Methylobacterium extorquens).